The chain runs to 560 residues: Protein DETOXIFICATION 45, chloroplastic (560 aa).

Residues 1–75 (MESSRVVVGG…QTNPDCGVVK (75 aa)) constitute a chloroplast transit peptide. A run of 12 helical transmembrane segments spans residues 109–129 (LVMLSLPAIAGQAIDPLTLLM), 147–167 (VSMAIFNTISKLFNIPLLSVA), 209–229 (ALVLAIGIGIFEALALSLASG), 250–270 (FLVLRALGAPAYVVSLALQGI), 280–300 (PVYCLGIGNFLAVFLFPLFIY), 308–328 (GAAISSVISQYTVAILMLILL), 353–373 (FVLGRTLSVLVTMTVATSMAA), 389–411 (VWLAVSLLTDALASSGQALIASS), 426–446 (FVLKIGVVTGIALAIVLGMSF), 466–486 (GVLFVAATQPITALAFIFDGL), 495–515 (YAACSMMVVGGISSAFMLYAP), and 523–543 (VWVGLSMFMGLRMVAGFSRLM).

This sequence belongs to the multi antimicrobial extrusion (MATE) (TC 2.A.66.1) family. As to expression, ubiquitous.

Its subcellular location is the plastid. It is found in the chloroplast membrane. This chain is Protein DETOXIFICATION 45, chloroplastic, found in Arabidopsis thaliana (Mouse-ear cress).